The primary structure comprises 150 residues: Ribosome-binding factor A (150 aa).

Positions 131 to 150 (LSHDDDEDGGADEAPRNGDE) are disordered.

This sequence belongs to the RbfA family. As to quaternary structure, monomer. Binds 30S ribosomal subunits, but not 50S ribosomal subunits or 70S ribosomes.

It is found in the cytoplasm. Functionally, one of several proteins that assist in the late maturation steps of the functional core of the 30S ribosomal subunit. Associates with free 30S ribosomal subunits (but not with 30S subunits that are part of 70S ribosomes or polysomes). Required for efficient processing of 16S rRNA. May interact with the 5'-terminal helix region of 16S rRNA. The polypeptide is Ribosome-binding factor A (Brucella melitensis biotype 2 (strain ATCC 23457)).